A 281-amino-acid chain; its full sequence is Aspartate/glutamate leucyltransferase (281 aa).

This sequence belongs to the R-transferase family. Bpt subfamily.

It localises to the cytoplasm. It catalyses the reaction N-terminal L-glutamyl-[protein] + L-leucyl-tRNA(Leu) = N-terminal L-leucyl-L-glutamyl-[protein] + tRNA(Leu) + H(+). The catalysed reaction is N-terminal L-aspartyl-[protein] + L-leucyl-tRNA(Leu) = N-terminal L-leucyl-L-aspartyl-[protein] + tRNA(Leu) + H(+). Functions in the N-end rule pathway of protein degradation where it conjugates Leu from its aminoacyl-tRNA to the N-termini of proteins containing an N-terminal aspartate or glutamate. The sequence is that of Aspartate/glutamate leucyltransferase from Paracoccus denitrificans (strain Pd 1222).